The sequence spans 150 residues: MKQFEIVTQPIETEQYRDFTINERQGAVVVFTGHVREWTKGIRTQHLEYEAYIPMAEKKLAQIGKEIEEKWPGTITTIVHRIGPLQISDIAVLIAVSSPHRKAAYAANEYAIERIKEIVPIWKKEIWEDGAEWQGHQKGTYNEAKKGKAR.

Residues 34–36 (HVR), threonine 44, 100–101 (HR), lysine 116, and 123–125 (KKE) each bind substrate.

It belongs to the MoaE family. As to quaternary structure, heterotetramer of 2 MoaD subunits and 2 MoaE subunits. Also stable as homodimer. The enzyme changes between these two forms during catalysis.

It catalyses the reaction 2 [molybdopterin-synthase sulfur-carrier protein]-C-terminal-Gly-aminoethanethioate + cyclic pyranopterin phosphate + H2O = molybdopterin + 2 [molybdopterin-synthase sulfur-carrier protein]-C-terminal Gly-Gly + 2 H(+). It functions in the pathway cofactor biosynthesis; molybdopterin biosynthesis. Its function is as follows. Converts molybdopterin precursor Z into molybdopterin. This requires the incorporation of two sulfur atoms into precursor Z to generate a dithiolene group. The sulfur is provided by MoaD. This is Molybdopterin synthase catalytic subunit (moaE) from Staphylococcus epidermidis (strain ATCC 35984 / DSM 28319 / BCRC 17069 / CCUG 31568 / BM 3577 / RP62A).